Here is a 430-residue protein sequence, read N- to C-terminus: Lipoyl synthase, mitochondrial (430 aa).

A mitochondrion-targeting transit peptide spans 1–29; it reads MASPVPIQRLQAPLRRSLARAAALSTRSY. Residues 28-58 are compositionally biased toward low complexity; sequence SYATIPSGPSSQPTSQESSSAASASAPATKP. The disordered stretch occupies residues 28–62; the sequence is SYATIPSGPSSQPTSQESSSAASASAPATKPRPTY. [4Fe-4S] cluster contacts are provided by C142, C147, C153, C173, C177, C180, and S390. The region spanning 156–379 is the Radical SAM core domain; it reads GSNKAAATAT…RQRALDMGFL (224 aa).

It belongs to the radical SAM superfamily. Lipoyl synthase family. [4Fe-4S] cluster is required as a cofactor.

Its subcellular location is the mitochondrion. It carries out the reaction [[Fe-S] cluster scaffold protein carrying a second [4Fe-4S](2+) cluster] + N(6)-octanoyl-L-lysyl-[protein] + 2 oxidized [2Fe-2S]-[ferredoxin] + 2 S-adenosyl-L-methionine + 4 H(+) = [[Fe-S] cluster scaffold protein] + N(6)-[(R)-dihydrolipoyl]-L-lysyl-[protein] + 4 Fe(3+) + 2 hydrogen sulfide + 2 5'-deoxyadenosine + 2 L-methionine + 2 reduced [2Fe-2S]-[ferredoxin]. The protein operates within protein modification; protein lipoylation via endogenous pathway; protein N(6)-(lipoyl)lysine from octanoyl-[acyl-carrier-protein]: step 2/2. Catalyzes the radical-mediated insertion of two sulfur atoms into the C-6 and C-8 positions of the octanoyl moiety bound to the lipoyl domains of lipoate-dependent enzymes, thereby converting the octanoylated domains into lipoylated derivatives. This is Lipoyl synthase, mitochondrial from Neurospora crassa (strain ATCC 24698 / 74-OR23-1A / CBS 708.71 / DSM 1257 / FGSC 987).